The chain runs to 477 residues: Bifunctional protein HldE (477 aa).

The ribokinase stretch occupies residues 1–318; it reads MKVNLPAFER…ENAVRGRADT (318 aa). 195–198 contacts ATP; that stretch reads NLSE. Residue Asp264 is part of the active site. Residues 344–477 are cytidylyltransferase; sequence MTNGVFDILH…IKKIQTESEK (134 aa).

This sequence in the N-terminal section; belongs to the carbohydrate kinase PfkB family. The protein in the C-terminal section; belongs to the cytidylyltransferase family. Homodimer.

The catalysed reaction is D-glycero-beta-D-manno-heptose 7-phosphate + ATP = D-glycero-beta-D-manno-heptose 1,7-bisphosphate + ADP + H(+). It catalyses the reaction D-glycero-beta-D-manno-heptose 1-phosphate + ATP + H(+) = ADP-D-glycero-beta-D-manno-heptose + diphosphate. It functions in the pathway nucleotide-sugar biosynthesis; ADP-L-glycero-beta-D-manno-heptose biosynthesis; ADP-L-glycero-beta-D-manno-heptose from D-glycero-beta-D-manno-heptose 7-phosphate: step 1/4. Its pathway is nucleotide-sugar biosynthesis; ADP-L-glycero-beta-D-manno-heptose biosynthesis; ADP-L-glycero-beta-D-manno-heptose from D-glycero-beta-D-manno-heptose 7-phosphate: step 3/4. Catalyzes the phosphorylation of D-glycero-D-manno-heptose 7-phosphate at the C-1 position to selectively form D-glycero-beta-D-manno-heptose-1,7-bisphosphate. In terms of biological role, catalyzes the ADP transfer from ATP to D-glycero-beta-D-manno-heptose 1-phosphate, yielding ADP-D-glycero-beta-D-manno-heptose. The sequence is that of Bifunctional protein HldE from Salmonella paratyphi A (strain ATCC 9150 / SARB42).